The chain runs to 168 residues: Dihydrofolate reductase (168 aa).

The 159-residue stretch at 1–159 folds into the DHFR domain; it reads MISFIFAMDA…YDYEFLMYEK (159 aa). 5–7 contributes to the substrate binding site; the sequence is IFA. NADP(+)-binding positions include 6–7 and 14–19; these read FA and IGKDND. D27 is a substrate binding site. Residue 43–46 coordinates NADP(+); it reads GRKT. R57 serves as a coordination point for substrate. NADP(+) is bound by residues 62-65 and 95-100; these read VTSA and IGGAQL. T114 contributes to the substrate binding site.

It belongs to the dihydrofolate reductase family.

It carries out the reaction (6S)-5,6,7,8-tetrahydrofolate + NADP(+) = 7,8-dihydrofolate + NADPH + H(+). It participates in cofactor biosynthesis; tetrahydrofolate biosynthesis; 5,6,7,8-tetrahydrofolate from 7,8-dihydrofolate: step 1/1. In terms of biological role, key enzyme in folate metabolism. Catalyzes an essential reaction for de novo glycine and purine synthesis, and for DNA precursor synthesis. The polypeptide is Dihydrofolate reductase (dfrA) (Bacillus subtilis (strain 168)).